A 333-amino-acid polypeptide reads, in one-letter code: Phosphoenolpyruvate transferase (333 aa).

Asp65 contacts 7,8-didemethyl-8-hydroxy-5-deazariboflavin.

The protein belongs to the CofD family. In terms of assembly, homodimer. Mg(2+) serves as cofactor.

It carries out the reaction enolpyruvoyl-2-diphospho-5'-guanosine + 7,8-didemethyl-8-hydroxy-5-deazariboflavin = dehydro coenzyme F420-0 + GMP + H(+). It participates in cofactor biosynthesis; coenzyme F420 biosynthesis. In terms of biological role, catalyzes the transfer of the phosphoenolpyruvate moiety from enoylpyruvoyl-2-diphospho-5'-guanosine (EPPG) to 7,8-didemethyl-8-hydroxy-5-deazariboflavin (FO) with the formation of dehydro coenzyme F420-0 and GMP. This chain is Phosphoenolpyruvate transferase, found in Mycobacterium leprae (strain TN).